The sequence spans 122 residues: Large ribosomal subunit protein uL14 (122 aa).

The protein belongs to the universal ribosomal protein uL14 family. Part of the 50S ribosomal subunit. Forms a cluster with proteins L3 and L19. In the 70S ribosome, L14 and L19 interact and together make contacts with the 16S rRNA in bridges B5 and B8.

In terms of biological role, binds to 23S rRNA. Forms part of two intersubunit bridges in the 70S ribosome. The protein is Large ribosomal subunit protein uL14 of Bradyrhizobium sp. (strain BTAi1 / ATCC BAA-1182).